We begin with the raw amino-acid sequence, 576 residues long: Arginine--tRNA ligase (576 aa).

A 'HIGH' region motif is present at residues 122-132 (PNVAKEMHVGH).

It belongs to the class-I aminoacyl-tRNA synthetase family. As to quaternary structure, monomer.

It is found in the cytoplasm. It catalyses the reaction tRNA(Arg) + L-arginine + ATP = L-arginyl-tRNA(Arg) + AMP + diphosphate. This is Arginine--tRNA ligase from Erwinia tasmaniensis (strain DSM 17950 / CFBP 7177 / CIP 109463 / NCPPB 4357 / Et1/99).